A 59-amino-acid polypeptide reads, in one-letter code: Probable stress-associated endoplasmic reticulum protein (59 aa).

Residues 1-30 are disordered; that stretch reads MSQSRTLRQKSQKYQENIEKRGVASPKKKE. The Cytoplasmic segment spans residues 1–34; it reads MSQSRTLRQKSQKYQENIEKRGVASPKKKEDGLN. Over residues 16–30 the composition is skewed to basic and acidic residues; that stretch reads ENIEKRGVASPKKKE. A helical; Anchor for type IV membrane protein membrane pass occupies residues 35-55; it reads INPYVLGFIIFVVVGSTLLQI. Over 56–59 the chain is Extracellular; that stretch reads LKGQ.

Belongs to the RAMP4 family.

Its subcellular location is the membrane. It localises to the endoplasmic reticulum membrane. May interact with target proteins during translocation into the lumen of the endoplasmic reticulum. May protect unfolded target proteins against degradation and facilitate correct glycosylation. The polypeptide is Probable stress-associated endoplasmic reticulum protein (serp) (Dictyostelium discoideum (Social amoeba)).